A 352-amino-acid polypeptide reads, in one-letter code: MFATPLRQPAAANHQTPKNSAGMDEHGKPYQYEITDHGYGKDAVKVLHVSRNGPVHAIQEFEVGTHLKLYSKKDYYQGNNSDIVATDSQKNTVYLLAKKHGIESPEKFALLLARHFINKYSHVEEAHVHVEAYPWQRVCQEETRTNVNGKCENGVQGNCDFSSIDNRSLHNHAFIFTPTALHYCDVVIRRTDPKQTVITGIKGLRVLKTTQSSFVNFVNDEFRSLPDQYDRIFSTVVDCSWEYSDTENLDFLRAWQTVKNIIIRNFAGDPQVGVSSPSVQHTLYLSERQVLDVLPQVSVISMTMPNKHYFNFDTKPFQKIAPGDNNEVFIPVDKPHGTIYAQLARKNINSHL.

Residues 1 to 32 (MFATPLRQPAAANHQTPKNSAGMDEHGKPYQY) form a disordered region. Over residues 23–32 (MDEHGKPYQY) the composition is skewed to basic and acidic residues. Active-site charge relay system residues include lysine 41 and threonine 86. Urate-binding residues include threonine 86, aspartate 87, phenylalanine 214, arginine 231, valine 279, glutamine 280, and asparagine 306. The active-site Charge relay system is the histidine 308. Positions 350-352 (SHL) match the Microbody targeting signal motif.

Belongs to the uricase family. As to expression, malpighian tubules.

It localises to the peroxisome. The catalysed reaction is urate + O2 + H2O = 5-hydroxyisourate + H2O2. It functions in the pathway purine metabolism; urate degradation; (S)-allantoin from urate: step 1/3. Repressed by 20-hydroxyecdysone. In terms of biological role, catalyzes the oxidation of uric acid to 5-hydroxyisourate, which is further processed to form (S)-allantoin. This Drosophila melanogaster (Fruit fly) protein is Uricase (Uro).